The sequence spans 35 residues: Photosystem II reaction center protein T (35 aa).

The helical transmembrane segment at 3-23 (ALVYTFLLVSTLGIIFFAIFF) threads the bilayer.

The protein belongs to the PsbT family. As to quaternary structure, PSII is composed of 1 copy each of membrane proteins PsbA, PsbB, PsbC, PsbD, PsbE, PsbF, PsbH, PsbI, PsbJ, PsbK, PsbL, PsbM, PsbT, PsbY, PsbZ, Psb30/Ycf12, at least 3 peripheral proteins of the oxygen-evolving complex and a large number of cofactors. It forms dimeric complexes.

It localises to the plastid. It is found in the chloroplast thylakoid membrane. Functionally, found at the monomer-monomer interface of the photosystem II (PS II) dimer, plays a role in assembly and dimerization of PSII. PSII is a light-driven water plastoquinone oxidoreductase, using light energy to abstract electrons from H(2)O, generating a proton gradient subsequently used for ATP formation. This chain is Photosystem II reaction center protein T, found in Pinus thunbergii (Japanese black pine).